An 89-amino-acid polypeptide reads, in one-letter code: Neurotoxin beta-KTx 12 (89 aa).

The signal sequence occupies residues 1 to 20 (MKQYIFFLALIVLVSTFAEA). Positions 21-39 (GKKTEILDKVKKVFSKAKD) are excised as a propeptide. Residues 53 to 89 (ELGCPFIDKWCEDHCESKKLVGKCENFDCSCVKLGGK) enclose the BetaSPN-type CS-alpha/beta domain. Disulfide bonds link C56-C76, C63-C81, and C67-C83.

The protein belongs to the long chain scorpion toxin family. Class 2 subfamily. As to expression, expressed by the venom gland.

It localises to the secreted. Its function is as follows. Inhibits voltage-gated potassium channel. The sequence is that of Neurotoxin beta-KTx 12 from Lychas mucronatus (Chinese swimming scorpion).